The primary structure comprises 218 residues: Small ribosomal subunit protein uS3c (218 aa).

A KH type-2 domain is found at 43-118 (IKNYVQKNPR…RLNIAIARIS (76 aa)).

It belongs to the universal ribosomal protein uS3 family. Part of the 30S ribosomal subunit.

The protein localises to the plastid. It localises to the chloroplast. This Acorus calamus (Sweet flag) protein is Small ribosomal subunit protein uS3c (rps3).